We begin with the raw amino-acid sequence, 156 residues long: MQAILETVSNLLPYHLLSYGALLGTELFQSFVNTKICYQALPMKEFLALQKRVFPAYFRCQVGLVVLTAVTRPPYSILSFSQHIWDSVPLIAVGVTGALNCAMNEDNSSTTDPAKIQQANKTFSRNHAMSIHLNAIALVATVWYGFTLSSSLLNGL.

2 N-linked (GlcNAc...) asparagine glycosylation sites follow: Asn-107 and Asn-120. Residues Ile-131 to Leu-153 traverse the membrane as a helical segment.

It is found in the membrane. It participates in secondary metabolite biosynthesis. In terms of biological role, part of the gene cluster that mediates the biosynthesis of the isocyanide xanthocillin and its derivatives. The first step of the pathway consists in the conversion of tyrosine into a vinyl-isonitrile intermediate by the isocyanide synthase xanB. Subsequent oxidative dimerization of this intermediate to form xanthocillin may involve the cytochrome P450 monooxygenase xanG, whose expression is coregulated with that of XanB. Xanthocillin can be further modified by the isonitrile hydratase-like protein xanA which introduces N-formyl groups and the methyltransferase xanE which introduces methyl groups, leading to the production of several derivatives including fumiformamide. Finally, fumiformamide can be subject to both oxidative and reductive cyclization to yield melanocins E and F, respectively. The sequence is that of Xanthocillin biosynthesis cluster protein D from Aspergillus fumigatus (strain ATCC MYA-4609 / CBS 101355 / FGSC A1100 / Af293) (Neosartorya fumigata).